A 1590-amino-acid chain; its full sequence is Pentafunctional AROM polypeptide (1590 aa).

The 3-dehydroquinate synthase stretch occupies residues methionine 1 to aspartate 387. Residues aspartate 49–asparagine 51, glutamate 86–lysine 89, glycine 117–valine 119, and aspartate 122 contribute to the NAD(+) site. Residue arginine 133 coordinates 7-phospho-2-dehydro-3-deoxy-D-arabino-heptonate. Position 142–143 (threonine 142–threonine 143) interacts with NAD(+). The 7-phospho-2-dehydro-3-deoxy-D-arabino-heptonate site is built by aspartate 149 and lysine 155. NAD(+) is bound at residue lysine 164. Residue asparagine 165 participates in 7-phospho-2-dehydro-3-deoxy-D-arabino-heptonate binding. NAD(+)-binding positions include phenylalanine 182–threonine 185 and asparagine 193. Position 197 (glutamate 197) interacts with Zn(2+). 7-phospho-2-dehydro-3-deoxy-D-arabino-heptonate is bound by residues glutamate 197–lysine 200 and lysine 253. Glutamate 263 acts as the Proton acceptor; for 3-dehydroquinate synthase activity in catalysis. Residues arginine 267–asparagine 271 and histidine 274 each bind 7-phospho-2-dehydro-3-deoxy-D-arabino-heptonate. Residue histidine 274 coordinates Zn(2+). Histidine 278 functions as the Proton acceptor; for 3-dehydroquinate synthase activity in the catalytic mechanism. 7-phospho-2-dehydro-3-deoxy-D-arabino-heptonate is bound by residues histidine 290 and lysine 359. Residue histidine 290 participates in Zn(2+) binding. Residues valine 400–valine 841 are EPSP synthase. Cysteine 823 acts as the For EPSP synthase activity in catalysis. The segment at aspartate 863–serine 1055 is shikimate kinase. Glycine 870–threonine 877 is a binding site for ATP. The 3-dehydroquinase stretch occupies residues leucine 1056–glutamate 1276. Histidine 1179 acts as the Proton acceptor; for 3-dehydroquinate dehydratase activity in catalysis. Residue lysine 1207 is the Schiff-base intermediate with substrate; for 3-dehydroquinate dehydratase activity of the active site. Residues proline 1289–cysteine 1590 form a shikimate dehydrogenase region.

In the N-terminal section; belongs to the sugar phosphate cyclases superfamily. Dehydroquinate synthase family. The protein in the 2nd section; belongs to the EPSP synthase family. This sequence in the 3rd section; belongs to the shikimate kinase family. It in the 4th section; belongs to the type-I 3-dehydroquinase family. In the C-terminal section; belongs to the shikimate dehydrogenase family. In terms of assembly, homodimer. Requires Zn(2+) as cofactor.

The protein resides in the cytoplasm. It carries out the reaction 7-phospho-2-dehydro-3-deoxy-D-arabino-heptonate = 3-dehydroquinate + phosphate. The enzyme catalyses 3-dehydroquinate = 3-dehydroshikimate + H2O. It catalyses the reaction shikimate + NADP(+) = 3-dehydroshikimate + NADPH + H(+). The catalysed reaction is shikimate + ATP = 3-phosphoshikimate + ADP + H(+). It carries out the reaction 3-phosphoshikimate + phosphoenolpyruvate = 5-O-(1-carboxyvinyl)-3-phosphoshikimate + phosphate. It participates in metabolic intermediate biosynthesis; chorismate biosynthesis; chorismate from D-erythrose 4-phosphate and phosphoenolpyruvate: step 2/7. The protein operates within metabolic intermediate biosynthesis; chorismate biosynthesis; chorismate from D-erythrose 4-phosphate and phosphoenolpyruvate: step 3/7. It functions in the pathway metabolic intermediate biosynthesis; chorismate biosynthesis; chorismate from D-erythrose 4-phosphate and phosphoenolpyruvate: step 4/7. Its pathway is metabolic intermediate biosynthesis; chorismate biosynthesis; chorismate from D-erythrose 4-phosphate and phosphoenolpyruvate: step 5/7. It participates in metabolic intermediate biosynthesis; chorismate biosynthesis; chorismate from D-erythrose 4-phosphate and phosphoenolpyruvate: step 6/7. Functionally, the AROM polypeptide catalyzes 5 consecutive enzymatic reactions in prechorismate polyaromatic amino acid biosynthesis. The polypeptide is Pentafunctional AROM polypeptide (Sclerotinia sclerotiorum (White mold)).